The primary structure comprises 90 residues: MSNLRGTNRFILVAVLVSFVFLSIMNAEARKEIGYPKQRFGEDRTNPYEEITPPLIGGCDPKNPQTCLPKQPANPYRRGCLKITRCQRDV.

Residues 1 to 29 form the signal peptide; that stretch reads MSNLRGTNRFILVAVLVSFVFLSIMNAEA. Disulfide bonds link Cys59-Cys67 and Cys80-Cys86.

Belongs to the plant rapid alkalinization factor (RALF) family.

It is found in the secreted. Functionally, cell signaling peptide that may regulate plant stress, growth, and development. Mediates a rapid alkalinization of extracellular space by mediating a transient increase in the cytoplasmic Ca(2+) concentration leading to a calcium-dependent signaling events through a cell surface receptor and a concomitant activation of some intracellular mitogen-activated protein kinases. This chain is Protein RALF-like 3 (RALFL3), found in Arabidopsis thaliana (Mouse-ear cress).